Reading from the N-terminus, the 562-residue chain is Sensor histidine kinase MtrB (562 aa).

Transmembrane regions (helical) follow at residues 42-62 (VVAL…FVLT) and 213-233 (GTMA…ALLV). Residues 235-287 (RQVVVPVRSASRIAERFAEGHLSERMPVRGEDDMARLAVSFNDMAESLSRQIT) enclose the HAMP domain. The Histidine kinase domain maps to 302–519 (DVSHELRTPL…CFRLTLPLVR (218 aa)). Residues 526–562 (SPLPMKPILQPSPQASTAGQQHGTQRQRLREHAERSR) form a disordered region. Polar residues predominate over residues 536 to 551 (PSPQASTAGQQHGTQR). The span at 553–562 (RLREHAERSR) shows a compositional bias: basic and acidic residues.

The protein localises to the cell membrane. The enzyme catalyses ATP + protein L-histidine = ADP + protein N-phospho-L-histidine.. Its function is as follows. Member of the two-component regulatory system MtrA/MtrB. Seems to function as a membrane-associated protein kinase that phosphorylates MtrA in response to environmental signals. This Mycobacterium leprae (strain TN) protein is Sensor histidine kinase MtrB (mtrB).